A 478-amino-acid polypeptide reads, in one-letter code: MARGPARTSLGPGSQQLPLLSLLLLLLLRDADGSHTAAARPPPPAAADGLAGDKNPQRSPGDVAAAQSPGAQDMVAVHMLRLYEKYSRRGARPGGGNTVRSFRARLEVVNQKAVYFFNLTSMQDSEMILTATFHFYSEPQWPPAREVPCKQRAKNASCRLLPPGPPARQHLLFRSLSQNTATQGLLRGAMALPPPPRGLWQAKDISLIVKAARRDGELLLSAQLDSGEKDTGVPRLGPHAPYILIYANDLAISEPNSVAVTLQRYDPFQAGDPEPGAAPNSSADPRVRRATQATGPLQNNELPGLDERPAQAPHAQHYHKHELWPNPLRALKPRPGRKDRRKKGQDVFMASSQVLDFDEKTMQKARKKQWDEPRVCSRRYLKVDFADIGWNEWIISPKSFDAYYCSGACEFPMPKMVRPSNHATIQSIVRAVGIVPGIPEPCCVPDKMSSLGVLFLDENRNVVLKVYPNMSVETCACR.

An N-terminal signal peptide occupies residues 1–33; it reads MARGPARTSLGPGSQQLPLLSLLLLLLLRDADG. Residues 34-70 form a disordered region; the sequence is SHTAAARPPPPAAADGLAGDKNPQRSPGDVAAAQSPG. The propeptide occupies 34 to 368; it reads SHTAAARPPP…EKTMQKARKK (335 aa). N-linked (GlcNAc...) asparagine glycosylation is found at Asn-118, Asn-155, and Asn-280. A disordered region spans residues 267 to 345; the sequence is PFQAGDPEPG…GRKDRRKKGQ (79 aa). Residues 291–301 are compositionally biased toward polar residues; that stretch reads TQATGPLQNNE. Residues 331-343 show a composition bias toward basic residues; that stretch reads LKPRPGRKDRRKK. 3 cysteine pairs are disulfide-bonded: Cys-376-Cys-443, Cys-405-Cys-475, and Cys-409-Cys-477. The N-linked (GlcNAc...) asparagine glycan is linked to Asn-469.

Belongs to the TGF-beta family. In terms of assembly, homodimer or heterodimer. Can form a non-covalent complex of the mature region and the pro-region.

The protein resides in the secreted. Growth factor involved in osteogenesis and adipogenesis. Plays an inhibitory role in the process of osteoblast differentiation via SMAD2/3 pathway. Plays an inhibitory role in the process of adipogenesis. In Bos taurus (Bovine), this protein is Growth/differentiation factor 10 (GDF10).